The primary structure comprises 382 residues: Dual-specificity RNA methyltransferase RlmN (382 aa).

The Proton acceptor role is filled by glutamate 94. Residues 100–336 form the Radical SAM core domain; the sequence is EANRGTLCVS…NTITRKTRGD (237 aa). Cysteines 107 and 342 form a disulfide. Residues cysteine 114, cysteine 118, and cysteine 121 each contribute to the [4Fe-4S] cluster site. S-adenosyl-L-methionine contacts are provided by residues 168-169, serine 200, 222-224, and asparagine 299; these read GE and SLH. The S-methylcysteine intermediate role is filled by cysteine 342.

This sequence belongs to the radical SAM superfamily. RlmN family. The cofactor is [4Fe-4S] cluster.

Its subcellular location is the cytoplasm. It carries out the reaction adenosine(2503) in 23S rRNA + 2 reduced [2Fe-2S]-[ferredoxin] + 2 S-adenosyl-L-methionine = 2-methyladenosine(2503) in 23S rRNA + 5'-deoxyadenosine + L-methionine + 2 oxidized [2Fe-2S]-[ferredoxin] + S-adenosyl-L-homocysteine. It catalyses the reaction adenosine(37) in tRNA + 2 reduced [2Fe-2S]-[ferredoxin] + 2 S-adenosyl-L-methionine = 2-methyladenosine(37) in tRNA + 5'-deoxyadenosine + L-methionine + 2 oxidized [2Fe-2S]-[ferredoxin] + S-adenosyl-L-homocysteine. Its function is as follows. Specifically methylates position 2 of adenine 2503 in 23S rRNA and position 2 of adenine 37 in tRNAs. m2A2503 modification seems to play a crucial role in the proofreading step occurring at the peptidyl transferase center and thus would serve to optimize ribosomal fidelity. The sequence is that of Dual-specificity RNA methyltransferase RlmN from Legionella pneumophila (strain Lens).